Reading from the N-terminus, the 515-residue chain is MDKISIIPIVGVALSLAIILQLGRTYWRLRHIPGPFPACITNFQRVGWVKTKRAHLILQDMHKKYGEVVRIGPNMVSFSNPEVIPTVYPARSGFPKGDFYVTLRPYTRGGGALHAVFNTTEEDLHKQIKSPIAPMFTPANTPSFEGLVDEVLTCIHEKLDENFIANSEIFNLGQWLQYFAFDVMGTMTFSKRYGFLDTGKDVGRMLGTIVDFMRDAAPMTQIPWLDWALRKNRIGDSIQRLFGKTASLGILGFVGKAIKERQELLSKGDFKVSDEKSGRKDFLTRFIELQQNDPKIPPWAPTAWTFSNVIAGSDSVGSLMRTTMFNLLVYPHTLEKLHDELRSAGVSRPYPKWSEIRNLLYLDACVQEGARMHPPFALPFERVVPAGGITILGYYLPGGTVVGGSPYVVNRHRETFGRDAEFWRPERWLESDEGHKRKLEQGVLTFGAGRRVCLGKHVGILEIKKLISFLVLNYDIRVVNPEKFELENSWFFFQRGLYATIRKRPDAVAVKNQQV.

Residues 3 to 23 traverse the membrane as a helical segment; it reads KISIIPIVGVALSLAIILQLG. Cys-453 is a binding site for heme.

The protein belongs to the cytochrome P450 family. The cofactor is heme.

It localises to the membrane. It functions in the pathway secondary metabolite biosynthesis; terpenoid biosynthesis. Its function is as follows. Cytochrome P450 monooxygenase; part of the gene cluster that mediates the biosynthesis of the phthalide-terpenoid hybrid 11'-O-desmethylfendlerol. Within the pathway, mfma and mfmC act together to convert 3,5-dimethylorsellinic acid (DMOA) into the phthalide 5,7-dihydroxy-4-(hydroxymethyl)-6-methylphthalide. MfmA performs especially an hydroxylation at C-9. The biosynthesis of 11'-O-desmethylfendlerol begins with the NR-PKS mfmB that forms 3,5-dimethylorsellinic acid (DMOA), which is then transformed into the phthalide 5,7-dihydroxy-4-(hydroxymethyl)-6-methylphthalide by the cytochrome P450 monooxygenase mfmA and the hydrolase mfmC. Subsequently, the methyltransferase mfmE catalyzes 7-O-methylation to yield 5-hydroxy-4-(hydroxymethyl)-7-methoxy-6-methylphthalide, which undergoes C-3 hydroxylation by the cytochrome P450 monooxygenase mfmF. The resultant cyclopolic acid (2,5-dihydroxy-4-(hydroxymethyl)-7-methoxy-6-methylphthalide) is then farnesylated by the DMATS-type prenyltransferase mfmD to afford 5-O-farnesylcyclopolic acid. Finally, the Pyr4-family terpene cyclase mfmH cyclizes the farnesyl moiety of 5-O-farnesylcyclopolic acid into a drimane-like structure, thus completing the biosynthesis of 11'-O-desmethylfendlerol. This chain is Cytochrome P450 monooxygenase mfmA, found in Annulohypoxylon moriforme (Filamentous fungus).